Reading from the N-terminus, the 804-residue chain is Probable exo-1,4-beta-xylosidase xlnD (804 aa).

A signal peptide spans 1-26; it reads MAHSMSRPVAATAAALLALALPQALA. Asparagine 29, asparagine 124, asparagine 148, asparagine 242, and asparagine 251 each carry an N-linked (GlcNAc...) asparagine glycan. Aspartate 315 is a catalytic residue. Asparagine 357, asparagine 390, asparagine 413, asparagine 444, asparagine 455, asparagine 573, asparagine 576, asparagine 665, asparagine 696, and asparagine 718 each carry an N-linked (GlcNAc...) asparagine glycan.

Belongs to the glycosyl hydrolase 3 family.

The protein resides in the secreted. The enzyme catalyses Hydrolysis of (1-&gt;4)-beta-D-xylans, to remove successive D-xylose residues from the non-reducing termini.. It participates in glycan degradation; xylan degradation. In terms of biological role, xylan 1,4-beta-xylosidase involved in the hydrolysis of xylan, a major structural heterogeneous polysaccharide found in plant biomass representing the second most abundant polysaccharide in the biosphere, after cellulose. The chain is Probable exo-1,4-beta-xylosidase xlnD (xlnD) from Aspergillus niger (strain ATCC MYA-4892 / CBS 513.88 / FGSC A1513).